Consider the following 407-residue polypeptide: Argininosuccinate synthase (407 aa).

ATP-binding positions include 13–21 (AYSGGLDTS) and A40. L-citrulline-binding residues include Y91 and S96. G121 lines the ATP pocket. Positions 123, 127, and 128 each coordinate L-aspartate. An L-citrulline-binding site is contributed by N127. L-citrulline contacts are provided by R131, S182, S191, E267, and Y279.

Belongs to the argininosuccinate synthase family. Type 1 subfamily. As to quaternary structure, homotetramer.

It is found in the cytoplasm. The enzyme catalyses L-citrulline + L-aspartate + ATP = 2-(N(omega)-L-arginino)succinate + AMP + diphosphate + H(+). It functions in the pathway amino-acid biosynthesis; L-arginine biosynthesis; L-arginine from L-ornithine and carbamoyl phosphate: step 2/3. The protein is Argininosuccinate synthase of Mesorhizobium japonicum (strain LMG 29417 / CECT 9101 / MAFF 303099) (Mesorhizobium loti (strain MAFF 303099)).